Here is a 489-residue protein sequence, read N- to C-terminus: Putative ATP-dependent RNA helicase T26G10.1 (489 aa).

A Q motif motif is present at residues 44 to 72 (KSFAELGVSQPLCDACQRLGWMKPSKIQQ). The 172-residue stretch at 75-246 (LPHALQGKDV…RASLRDPARV (172 aa)) folds into the Helicase ATP-binding domain. 88–95 (AETGSGKT) provides a ligand contact to ATP. The short motif at 194–197 (DEAD) is the DEAD box element. The Helicase C-terminal domain occupies 257 to 417 (NLKQHYIFVP…EYKCVENEVM (161 aa)). Residues 433–489 (EMKEMDEKKKSGKKRRQNDDFGDTEESGGRFKMGIKSMGGRGGSGGGRGGKKKKMSK) form a disordered region. The span at 469–480 (SMGGRGGSGGGR) shows a compositional bias: gly residues.

Belongs to the DEAD box helicase family. DDX47/RRP3 subfamily.

Its subcellular location is the nucleus. It carries out the reaction ATP + H2O = ADP + phosphate + H(+). Functionally, probable ATP-dependent RNA helicase which may be involved in ribosome biogenesis. The protein is Putative ATP-dependent RNA helicase T26G10.1 of Caenorhabditis elegans.